Here is a 119-residue protein sequence, read N- to C-terminus: Large ribosomal subunit protein uL18 (119 aa).

Belongs to the universal ribosomal protein uL18 family. Part of the 50S ribosomal subunit; part of the 5S rRNA/L5/L18/L25 subcomplex. Contacts the 5S and 23S rRNAs.

Functionally, this is one of the proteins that bind and probably mediate the attachment of the 5S RNA into the large ribosomal subunit, where it forms part of the central protuberance. This is Large ribosomal subunit protein uL18 from Sorangium cellulosum (strain So ce56) (Polyangium cellulosum (strain So ce56)).